The chain runs to 291 residues: Malolactic fermentation system transcriptional activator (291 aa).

Residues 1–60 enclose the HTH lysR-type domain; sequence MSLNLRDLEYFYQLSKLRSFTNVAKHFRVSQPTISYAIKRLETYYDCDLFYKDSSHQVVD. The H-T-H motif DNA-binding region spans 20 to 39; sequence FTNVAKHFRVSQPTISYAIK.

The protein belongs to the LysR transcriptional regulatory family.

The protein localises to the cytoplasm. In terms of biological role, required for malolactic fermentation. It is most probably a transcriptional activator. The polypeptide is Malolactic fermentation system transcriptional activator (mleR) (Lactococcus lactis subsp. lactis (strain IL1403) (Streptococcus lactis)).